Reading from the N-terminus, the 271-residue chain is ATP synthase subunit a (271 aa).

A run of 5 helical transmembrane segments spans residues 40–60 (TINIDSMFFSVVLGLLFLVLF), 100–120 (LIAPLALTIFVWVFLMNLMDL), 146–166 (DVNVTLSMALGVFILILFYSI), 220–240 (LIFILIAGLLPWWSQWILNVP), and 242–262 (AIFHILIITLQAFIFMVLTIV).

This sequence belongs to the ATPase A chain family. In terms of assembly, F-type ATPases have 2 components, CF(1) - the catalytic core - and CF(0) - the membrane proton channel. CF(1) has five subunits: alpha(3), beta(3), gamma(1), delta(1), epsilon(1). CF(0) has three main subunits: a(1), b(2) and c(9-12). The alpha and beta chains form an alternating ring which encloses part of the gamma chain. CF(1) is attached to CF(0) by a central stalk formed by the gamma and epsilon chains, while a peripheral stalk is formed by the delta and b chains.

It localises to the cell inner membrane. Its function is as follows. Key component of the proton channel; it plays a direct role in the translocation of protons across the membrane. The chain is ATP synthase subunit a from Escherichia coli O1:K1 / APEC.